The primary structure comprises 461 residues: Anthocyanidin 3-O-glucoside 5-O-glucosyltransferase (461 aa).

The N-terminal stretch at 1–15 is a signal peptide; sequence MSRAHVLLATFPAQG. Catalysis depends on His-16, which acts as the Proton acceptor. His-16 is a binding site for an anthocyanidin. Residues Gln-338, His-353, Trp-356, Asn-357, Ser-358, Glu-361, Asp-377, and Gln-378 each coordinate UDP-alpha-D-glucose.

This sequence belongs to the UDP-glycosyltransferase family.

The enzyme catalyses an anthocyanidin 3-O-beta-D-glucoside + UDP-alpha-D-glucose = an anthocyanidin 3,5-di-O-beta-D-glucoside + UDP + 2 H(+). It participates in pigment biosynthesis; anthocyanin biosynthesis. Functionally, catalyzes the glucosylation at the O-5 position of anthocyanidin 3-glucosides to form anthocyanidin 3,5-di-O-glucosides using UDP-glucose as sugar donor. Anthocyanidin 3,5-di-O-glucosides are molecules that are responsible for pigmentation. Also acts on anthocyanidin 3-O-(6-O-malonylglucoside). Much less active with hydroxycinnamoylglucose derivatives. No activity in the absence of the 3-O-glucoside group. This is Anthocyanidin 3-O-glucoside 5-O-glucosyltransferase (HGT8) from Verbena hybrida (Garden vervain).